The chain runs to 295 residues: Shikimate dehydrogenase (NADP(+)) (295 aa).

Residues 24-26 and T71 each bind shikimate; that span reads SRS. The Proton acceptor role is filled by K75. An NADP(+)-binding site is contributed by E87. Residues N96 and D111 each contribute to the shikimate site. NADP(+) is bound by residues 136–140, 160–165, and M233; these read GAGGA and NRTASR. Y235 is a shikimate binding site. G256 contributes to the NADP(+) binding site.

The protein belongs to the shikimate dehydrogenase family. Homodimer.

It carries out the reaction shikimate + NADP(+) = 3-dehydroshikimate + NADPH + H(+). Its pathway is metabolic intermediate biosynthesis; chorismate biosynthesis; chorismate from D-erythrose 4-phosphate and phosphoenolpyruvate: step 4/7. Involved in the biosynthesis of the chorismate, which leads to the biosynthesis of aromatic amino acids. Catalyzes the reversible NADPH linked reduction of 3-dehydroshikimate (DHSA) to yield shikimate (SA). In Cupriavidus taiwanensis (strain DSM 17343 / BCRC 17206 / CCUG 44338 / CIP 107171 / LMG 19424 / R1) (Ralstonia taiwanensis (strain LMG 19424)), this protein is Shikimate dehydrogenase (NADP(+)).